The following is a 379-amino-acid chain: UDP-N-acetylglucosamine--N-acetylmuramyl-(pentapeptide) pyrophosphoryl-undecaprenol N-acetylglucosamine transferase (379 aa).

UDP-N-acetyl-alpha-D-glucosamine is bound by residues 17–19 (TGG), N128, R169, S197, and Q298.

This sequence belongs to the glycosyltransferase 28 family. MurG subfamily.

The protein resides in the cell inner membrane. The enzyme catalyses di-trans,octa-cis-undecaprenyl diphospho-N-acetyl-alpha-D-muramoyl-L-alanyl-D-glutamyl-meso-2,6-diaminopimeloyl-D-alanyl-D-alanine + UDP-N-acetyl-alpha-D-glucosamine = di-trans,octa-cis-undecaprenyl diphospho-[N-acetyl-alpha-D-glucosaminyl-(1-&gt;4)]-N-acetyl-alpha-D-muramoyl-L-alanyl-D-glutamyl-meso-2,6-diaminopimeloyl-D-alanyl-D-alanine + UDP + H(+). The protein operates within cell wall biogenesis; peptidoglycan biosynthesis. Cell wall formation. Catalyzes the transfer of a GlcNAc subunit on undecaprenyl-pyrophosphoryl-MurNAc-pentapeptide (lipid intermediate I) to form undecaprenyl-pyrophosphoryl-MurNAc-(pentapeptide)GlcNAc (lipid intermediate II). The polypeptide is UDP-N-acetylglucosamine--N-acetylmuramyl-(pentapeptide) pyrophosphoryl-undecaprenol N-acetylglucosamine transferase (Brucella canis (strain ATCC 23365 / NCTC 10854 / RM-666)).